The primary structure comprises 304 residues: Small ribosomal subunit biogenesis GTPase RsgA (304 aa).

The CP-type G domain maps to 78-237 (VSFLTRPPVA…VADTPGFNRP (160 aa)). Residues 127-130 (TKTD) and 179-187 (GPSGVGKSS) each bind GTP. Zn(2+) contacts are provided by Cys262, Cys267, His269, and Cys275.

It belongs to the TRAFAC class YlqF/YawG GTPase family. RsgA subfamily. Monomer. Associates with 30S ribosomal subunit, binds 16S rRNA. Zn(2+) serves as cofactor.

It is found in the cytoplasm. Functionally, one of several proteins that assist in the late maturation steps of the functional core of the 30S ribosomal subunit. Helps release RbfA from mature subunits. May play a role in the assembly of ribosomal proteins into the subunit. Circularly permuted GTPase that catalyzes slow GTP hydrolysis, GTPase activity is stimulated by the 30S ribosomal subunit. This is Small ribosomal subunit biogenesis GTPase RsgA from Synechococcus sp. (strain CC9311).